Reading from the N-terminus, the 83-residue chain is Kappa-actitoxin-Aer3a (83 aa).

The first 22 residues, 1–22 (MKGQMIICLVLIALCMSVVVMA), serve as a signal peptide directing secretion. Positions 23–49 (QNLRAEELEKANPKDERVRSFERNQKR) are excised as a propeptide. The 33-residue stretch at 51–83 (CKDYLPKSECTQFRCRTSMKYKYTNCKKTCGTC) folds into the ShKT domain. Intrachain disulfides connect C51-C83, C60-C76, and C65-C80.

The protein belongs to the sea anemone type 1 potassium channel toxin family. Type 1a subfamily.

Its subcellular location is the secreted. It is found in the nematocyst. Functionally, specifically, dose-dependently and potently blocks the voltage-gated potassium channel Kv1.1/KCNA1 (Ki=1.6 pM). Moderately blocks potassium channel heterotetramers formed by 3 subunits of Kv1.1/KCNA1 and 1 subunit of Kv1.2/KCNA2 (Ki=56 nM) and weakly blocks those formed by 2 subunits of Kv1.1/KCNA1 and 2 subunits of Kv1.2/KCNA2 (Ki=14 nM). This is Kappa-actitoxin-Aer3a from Anemonia erythraea (Sea anemone).